Reading from the N-terminus, the 126-residue chain is Ribulose bisphosphate carboxylase small subunit, chloroplastic 1 (126 aa).

The protein belongs to the RuBisCO small chain family. In terms of assembly, heterohexadecamer of 8 large and 8 small subunits.

Its subcellular location is the plastid. The protein resides in the chloroplast. RuBisCO catalyzes two reactions: the carboxylation of D-ribulose 1,5-bisphosphate, the primary event in carbon dioxide fixation, as well as the oxidative fragmentation of the pentose substrate. Both reactions occur simultaneously and in competition at the same active site. Although the small subunit is not catalytic it is essential for maximal activity. The polypeptide is Ribulose bisphosphate carboxylase small subunit, chloroplastic 1 (Acetabularia peniculus (Green alga)).